A 173-amino-acid chain; its full sequence is Crossover junction endodeoxyribonuclease RuvC (173 aa).

Catalysis depends on residues D8, E67, and D139. Residues D8, E67, and D139 each coordinate Mg(2+).

It belongs to the RuvC family. Homodimer which binds Holliday junction (HJ) DNA. The HJ becomes 2-fold symmetrical on binding to RuvC with unstacked arms; it has a different conformation from HJ DNA in complex with RuvA. In the full resolvosome a probable DNA-RuvA(4)-RuvB(12)-RuvC(2) complex forms which resolves the HJ. The cofactor is Mg(2+).

It is found in the cytoplasm. It catalyses the reaction Endonucleolytic cleavage at a junction such as a reciprocal single-stranded crossover between two homologous DNA duplexes (Holliday junction).. Functionally, the RuvA-RuvB-RuvC complex processes Holliday junction (HJ) DNA during genetic recombination and DNA repair. Endonuclease that resolves HJ intermediates. Cleaves cruciform DNA by making single-stranded nicks across the HJ at symmetrical positions within the homologous arms, yielding a 5'-phosphate and a 3'-hydroxyl group; requires a central core of homology in the junction. The consensus cleavage sequence is 5'-(A/T)TT(C/G)-3'. Cleavage occurs on the 3'-side of the TT dinucleotide at the point of strand exchange. HJ branch migration catalyzed by RuvA-RuvB allows RuvC to scan DNA until it finds its consensus sequence, where it cleaves and resolves the cruciform DNA. The sequence is that of Crossover junction endodeoxyribonuclease RuvC from Shewanella pealeana (strain ATCC 700345 / ANG-SQ1).